Reading from the N-terminus, the 564-residue chain is MRSDKIKKGVEQAPARSLLHATGQIKSPGDMDKPFIAICNSYIDIVPGHVHLRELADVAKEAIREAGGIPFEFNTIGVDDGIAMGHIGMRYSLPSREVIADAAETVINAHWFDGVFYIPNCDKITPGMLLASVRTNVPAIFCSGGPMKAGLSAHGKALTLSSVFEAVGAFKDGSMSQEDFLDMEANACPTCGSCAGMFTANSMNCLMEILGMAVPGNGTTLAVSDARRELIRESAFHLMDLVKKDIRPRDIITKDAIDDAFALDMAMGGSTNTVLHTLALANEAGIEDYDLERINDIAKRVPYLSKIAPSSSYSMHDVHEAGGVSAIVKELVDLGGAIHPDRITVTGKTIRENVADAKINNTDVIHPKENPYSPVGGLSMLFGNIAPKGAAIKVGGVDPSVQVFKGEAICFSSHDEAVEAIDNHTVREGHVVVIRYEGPKGGPGMPEMLAPTSSIVGRGLGKDVALITDGRFSGATRGIAVGHISPEAAAGGPIALVHDGDIITIDLPNRTLNVDVSDEVLEERRKELPKFKAKVKTGYLARYTALVTSAHTGGILQIPEDLID.

Residue Asp-80 participates in Mg(2+) binding. Cys-121 is a [2Fe-2S] cluster binding site. Asp-122 and Lys-123 together coordinate Mg(2+). Lys-123 is modified (N6-carboxylysine). Cys-194 contributes to the [2Fe-2S] cluster binding site. Glu-447 serves as a coordination point for Mg(2+). Residue Ser-473 is the Proton acceptor of the active site.

This sequence belongs to the IlvD/Edd family. Homodimer. It depends on [2Fe-2S] cluster as a cofactor. Requires Mg(2+) as cofactor.

The enzyme catalyses (2R)-2,3-dihydroxy-3-methylbutanoate = 3-methyl-2-oxobutanoate + H2O. It carries out the reaction (2R,3R)-2,3-dihydroxy-3-methylpentanoate = (S)-3-methyl-2-oxopentanoate + H2O. It participates in amino-acid biosynthesis; L-isoleucine biosynthesis; L-isoleucine from 2-oxobutanoate: step 3/4. Its pathway is amino-acid biosynthesis; L-valine biosynthesis; L-valine from pyruvate: step 3/4. Its function is as follows. Functions in the biosynthesis of branched-chain amino acids. Catalyzes the dehydration of (2R,3R)-2,3-dihydroxy-3-methylpentanoate (2,3-dihydroxy-3-methylvalerate) into 2-oxo-3-methylpentanoate (2-oxo-3-methylvalerate) and of (2R)-2,3-dihydroxy-3-methylbutanoate (2,3-dihydroxyisovalerate) into 2-oxo-3-methylbutanoate (2-oxoisovalerate), the penultimate precursor to L-isoleucine and L-valine, respectively. This is Dihydroxy-acid dehydratase from Listeria welshimeri serovar 6b (strain ATCC 35897 / DSM 20650 / CCUG 15529 / CIP 8149 / NCTC 11857 / SLCC 5334 / V8).